Consider the following 694-residue polypeptide: MKPLTNGDLFKSPTLIKISALVFVTVAFFYLGKHWSDDGYQQLVFFSSSTSGSSIPEVSVSPNSNRVFNLSAIIPTNHTQIEIPATIRQQPPSVVADTEKVKVEANPPPPPPPSPSPPPPPGPVKSFGIVDANGVMSDDFEVGEVESDTVEDWGNQTEIVEAKSDGDSKARVRIKKFGMCPESMREYIPCLDNTDVIKKLKSTERGERFERHCPEKGKGLNCLVPPPKGYRQPIPWPKSRDEVWFSNVPHTRLVEDKGGQNWISRDKNKFKFPGGGTQFIHGADQYLDQMSKMVSDITFGKHIRVAMDVGCGVASFGAYLLSRDVMTMSVAPKDVHENQIQFALERGVPAMAAAFATRRLLYPSQAFDLIHCSRCRINWTRDDGILLLEINRMLRAGGYFAWAAQPVYKHEPALEEQWTEMLNLTISLCWKLVKKEGYVAIWQKPFNNDCYLSREAGTKPPLCDESDDPDNVWYTNLKPCISRIPEKGYGGNVPLWPARLHTPPDRLQTIKFDSYIARKELFKAESKYWNEIIGGYVRALKWKKMKLRNVLDMRAGFGGFAAALNDHKLDCWVLSVVPVSGPNTLPVIYDRGLLGVMHDWCEPFDTYPRTYDFLHASGLFSIERKRCEMSTILLEMDRILRPGGRAYIRDSIDVMDEIQEITKAMGWHTSLRDTSEGPHASYRILTCEKRLLRA.

Residues 1-14 (MKPLTNGDLFKSPT) lie on the Cytoplasmic side of the membrane. A helical; Signal-anchor for type II membrane protein transmembrane segment spans residues 15-32 (LIKISALVFVTVAFFYLG). Residues 33-694 (KHWSDDGYQQ…LTCEKRLLRA (662 aa)) lie on the Lumenal side of the membrane. N-linked (GlcNAc...) asparagine glycans are attached at residues asparagine 69 and asparagine 77. The tract at residues 83 to 128 (IPATIRQQPPSVVADTEKVKVEANPPPPPPPSPSPPPPPGPVKSFG) is disordered. Pro residues predominate over residues 106-123 (NPPPPPPPSPSPPPPPGP). 3 N-linked (GlcNAc...) asparagine glycosylation sites follow: asparagine 155, asparagine 378, and asparagine 423.

Belongs to the methyltransferase superfamily.

It is found in the golgi apparatus membrane. The polypeptide is Probable methyltransferase PMT11 (Arabidopsis thaliana (Mouse-ear cress)).